A 375-amino-acid chain; its full sequence is Platelet-derived growth factor receptor-like protein (375 aa).

A signal peptide spans 1–21 (MKVWLLLGLLLVHEALEDVTG). A disordered region spans residues 22-64 (QHLPKNKRPKEPGENRIKPTNKKVKPKIPKMKDRDSANSAPKT). Residues 40 to 50 (PTNKKVKPKIP) show a composition bias toward basic residues. The 98-residue stretch at 62-159 (PKTQSIMMQV…GYICRKDEAK (98 aa)) folds into the Ig-like C2-type 1 domain. An intrachain disulfide couples cysteine 96 to cysteine 143. Residues asparagine 132 and asparagine 219 are each glycosylated (N-linked (GlcNAc...) asparagine). One can recognise an Ig-like C2-type 2 domain in the interval 272–375 (PSTTILASSN…TTVATTVEFS (104 aa)). Cysteine 293 and cysteine 357 are joined by a disulfide.

As to quaternary structure, forms a complex composed of PDGFRL, TNK2 and GRB2. As to expression, expressed in colon, lung and liver.

The protein localises to the secreted. The sequence is that of Platelet-derived growth factor receptor-like protein (PDGFRL) from Homo sapiens (Human).